We begin with the raw amino-acid sequence, 304 residues long: MSWIERIKSNITPTRKASIPEGVWTKCDSCGQVLYRAELERNLEVCPKCDHHMRMSARNRLHSLLDEGSLVELGSELEPKDVLKFRDSKKYKDRLASAQKETGEKDALVVMKGTLHGMPVVAAAFEFAFMGGSMGSVVGARFVRAVEQALEDNCPLVCFSASGGARMQEALMSLMQMAKTSAALAKMQERGLPYISVLTDPTMGGVSASFAMLGDLNIAEPKALIGFAGPRVIEQTVREKLPPGFQRSEFLIEKGAIDMIVRRPEMRLKLASILAKLMNLPAPNPDAPREGVVVPPAPDQESEV.

Residues 23-292 (VWTKCDSCGQ…PNPDAPREGV (270 aa)) enclose the CoA carboxyltransferase N-terminal domain. Positions 27, 30, 46, and 49 each coordinate Zn(2+). A C4-type zinc finger spans residues 27–49 (CDSCGQVLYRAELERNLEVCPKC). Positions 284 to 304 (NPDAPREGVVVPPAPDQESEV) are disordered.

It belongs to the AccD/PCCB family. In terms of assembly, acetyl-CoA carboxylase is a heterohexamer composed of biotin carboxyl carrier protein (AccB), biotin carboxylase (AccC) and two subunits each of ACCase subunit alpha (AccA) and ACCase subunit beta (AccD). Zn(2+) serves as cofactor.

It is found in the cytoplasm. The enzyme catalyses N(6)-carboxybiotinyl-L-lysyl-[protein] + acetyl-CoA = N(6)-biotinyl-L-lysyl-[protein] + malonyl-CoA. Its pathway is lipid metabolism; malonyl-CoA biosynthesis; malonyl-CoA from acetyl-CoA: step 1/1. In terms of biological role, component of the acetyl coenzyme A carboxylase (ACC) complex. Biotin carboxylase (BC) catalyzes the carboxylation of biotin on its carrier protein (BCCP) and then the CO(2) group is transferred by the transcarboxylase to acetyl-CoA to form malonyl-CoA. This is Acetyl-coenzyme A carboxylase carboxyl transferase subunit beta from Salmonella paratyphi A (strain ATCC 9150 / SARB42).